The following is a 143-amino-acid chain: Endoribonuclease YbeY (143 aa).

Zn(2+)-binding residues include His111, His115, and Asp121.

The protein belongs to the endoribonuclease YbeY family. It depends on Zn(2+) as a cofactor.

Its subcellular location is the cytoplasm. Functionally, single strand-specific metallo-endoribonuclease involved in late-stage 70S ribosome quality control and in maturation of the 3' terminus of the 16S rRNA. This Cytophaga hutchinsonii (strain ATCC 33406 / DSM 1761 / CIP 103989 / NBRC 15051 / NCIMB 9469 / D465) protein is Endoribonuclease YbeY.